A 473-amino-acid polypeptide reads, in one-letter code: Transposase for insertion sequence element IS1151 (473 aa).

Belongs to the transposase 11 family.

Its function is as follows. Involved in the transposition of the insertion sequence. This Clostridium perfringens protein is Transposase for insertion sequence element IS1151 (tnp).